A 317-amino-acid chain; its full sequence is Porphobilinogen deaminase (317 aa).

C245 bears the S-(dipyrrolylmethanemethyl)cysteine mark.

It belongs to the HMBS family. In terms of assembly, monomer. Requires dipyrromethane as cofactor.

The catalysed reaction is 4 porphobilinogen + H2O = hydroxymethylbilane + 4 NH4(+). It functions in the pathway porphyrin-containing compound metabolism; protoporphyrin-IX biosynthesis; coproporphyrinogen-III from 5-aminolevulinate: step 2/4. The protein operates within porphyrin-containing compound metabolism; chlorophyll biosynthesis. Its function is as follows. Tetrapolymerization of the monopyrrole PBG into the hydroxymethylbilane pre-uroporphyrinogen in several discrete steps. The chain is Porphobilinogen deaminase from Parasynechococcus marenigrum (strain WH8102).